We begin with the raw amino-acid sequence, 280 residues long: Mediator of RNA polymerase II transcription subunit 2 (280 aa).

The disordered stretch occupies residues 212–247 (GLQNTSGGNEKKNDPQINFNDTNAPPSAVNVPENGN). Polar residues predominate over residues 226–236 (PQINFNDTNAP).

This sequence belongs to the Mediator complex subunit 2 family. Component of the Mediator complex.

It is found in the nucleus. Functionally, component of the Mediator complex, a coactivator involved in the regulated transcription of nearly all RNA polymerase II-dependent genes. Mediator functions as a bridge to convey information from gene-specific regulatory proteins to the basal RNA polymerase II transcription machinery. Mediator is recruited to promoters by direct interactions with regulatory proteins and serves as a scaffold for the assembly of a functional preinitiation complex with RNA polymerase II and the general transcription factors. This chain is Mediator of RNA polymerase II transcription subunit 2 (MED2), found in Kluyveromyces lactis (strain ATCC 8585 / CBS 2359 / DSM 70799 / NBRC 1267 / NRRL Y-1140 / WM37) (Yeast).